A 356-amino-acid polypeptide reads, in one-letter code: Glutamine synthetase (356 aa).

One can recognise a GS beta-grasp domain in the interval 19 to 99; it reads VIAEYIWIGG…VICDTYTPAG (81 aa). A GS catalytic domain is found at 106–356; the sequence is KRHGAAKIFS…IAETTLLWKP (251 aa).

The protein belongs to the glutamine synthetase family. In terms of assembly, homooctamer. As to expression, found at highest levels in root nodules.

It localises to the cytoplasm. The catalysed reaction is L-glutamate + NH4(+) + ATP = L-glutamine + ADP + phosphate + H(+). This chain is Glutamine synthetase (GLN1), found in Alnus glutinosa (European alder).